The sequence spans 80 residues: Large ribosomal subunit protein eL20 (80 aa).

Belongs to the eukaryotic ribosomal protein eL20 family. As to quaternary structure, part of the 50S ribosomal subunit. Binds 23S rRNA.

The protein is Large ribosomal subunit protein eL20 of Methanopyrus kandleri (strain AV19 / DSM 6324 / JCM 9639 / NBRC 100938).